The sequence spans 61 residues: Large ribosomal subunit protein uL30 (61 aa).

Belongs to the universal ribosomal protein uL30 family. As to quaternary structure, part of the 50S ribosomal subunit.

In Neisseria meningitidis serogroup C (strain 053442), this protein is Large ribosomal subunit protein uL30.